The following is a 45-amino-acid chain: Photosystem II reaction center protein K (45 aa).

Positions 1-8 (MLMSLFLA) are excised as a propeptide. The helical transmembrane segment at 23–43 (ILPIIPLFFLLLAFVWQAAIG) threads the bilayer.

It belongs to the PsbK family. As to quaternary structure, PSII is composed of 1 copy each of membrane proteins PsbA, PsbB, PsbC, PsbD, PsbE, PsbF, PsbH, PsbI, PsbJ, PsbK, PsbL, PsbM, PsbT, PsbX, PsbY, PsbZ, Psb30/Ycf12, at least 3 peripheral proteins of the oxygen-evolving complex and a large number of cofactors. It forms dimeric complexes.

The protein resides in the plastid. Its subcellular location is the cyanelle thylakoid membrane. One of the components of the core complex of photosystem II (PSII). PSII is a light-driven water:plastoquinone oxidoreductase that uses light energy to abstract electrons from H(2)O, generating O(2) and a proton gradient subsequently used for ATP formation. It consists of a core antenna complex that captures photons, and an electron transfer chain that converts photonic excitation into a charge separation. The protein is Photosystem II reaction center protein K of Cyanophora paradoxa.